The sequence spans 935 residues: Ribonuclease E (935 aa).

An S1 motif domain is found at 39 to 119 (ANIYKGKITR…GNKGAALTTF (81 aa)). Mg(2+) is bound by residues D302 and D345. Zn(2+)-binding residues include C403 and C406. Residues 403-406 (CPRC) form a required for zinc-mediated homotetramerization and catalytic activity region. Disordered regions lie at residues 571 to 669 (TKSE…DLRK) and 698 to 743 (VQNN…KSPM). Basic and acidic residues-rich tracts occupy residues 593–625 (RSQD…ERNQ) and 701–719 (NDEK…ERQR). Over residues 720-734 (RTPRHLRAANNQRRR) the composition is skewed to basic residues.

It belongs to the RNase E/G family. RNase E subfamily. In terms of assembly, component of the RNA degradosome, which is a multiprotein complex involved in RNA processing and mRNA degradation. Within the RNA degradosome, RNase E assembles into a homotetramer formed by a dimer of dimers. Zn(2+) is required as a cofactor. Mg(2+) serves as cofactor.

Its subcellular location is the cytoplasm. The protein localises to the cell inner membrane. The catalysed reaction is Endonucleolytic cleavage of single-stranded RNA in A- and U-rich regions.. Its function is as follows. Endoribonuclease that plays a central role in RNA processing and decay. Required for the maturation of 5S and 16S rRNAs and the majority of tRNAs. Also involved in the degradation of most mRNAs. This Haemophilus influenzae (strain ATCC 51907 / DSM 11121 / KW20 / Rd) protein is Ribonuclease E.